Reading from the N-terminus, the 928-residue chain is MSLGRYTRLDEIGRGSFATVYQGVHTKTGTYVAIKSVNLSKLNKKLKENLSSEIHILKGLYHPHIVALIDCQETSSHIHLVMEYCALGDLSLFIKRRDTLGDHRYTRDMIAKYPNPPGGALNEVVVRHFLKQLSSALKFLRDRNLIHRDIKPQNLLLCPSPSSYRSGAGSGAATVVPFKGCEDSFNPATGVDSLPLLKIADFGFARSLPATSLAETLCGSPLYMAPEILRYEKYDAKADLWSVGTVLYEMVVGKPPFRATNHVELLRKIEKGEDRIKFPEDNPASDAIKALIRALLKRNPVERLNFPEFFENEVITGPIPGLLADDQPSISRHRSVDPGTTEVPPRPDSRSGTSVPSGTRREREVNREDVYSPRSSPRNQKPSTPPTSTPMRRVGSTDRPPSAPKESEPPMAYPQRPNAVSHATAPGRQELLDRKATTTAIERQRSRNTYSEGSPRLDQPADKLKEEQERAAQDVAFERDYVVVEKRAVEVNAFADELAHSPRIQGGLSRAAQAGAISRRATVQGATPTLSSPQTTTGKAMQVFSGRSRADSTHHRQASYERRYGQSPTSATSAISKALNMASGRLFGMGFSPPLTITKGGRSPPLAYNPFPAYPTAHGSLMIIGDGAKSQVALDEDTKTVQVIEECATRSDVVYGFAEVKYKQLIPLAPSIQTDPSAKSNMSGVRDTAGSTDGDLTVDATVTLSEEALVLYVKALSLLAKSMDIAGVWWTRKNRGETFGDPVMSRADTTGALVGTRINNVVQWVRNRFNEVLEKAEFVRLKLIEGQKRLPPDHPSHPSNHSVTSSLGAGSTDIVVSSGVTAEKLMYDRALEMSRAAAINELTGEDLAGCEIAYVTAIRMLEAVLEDDEVPGLGPGKVDTSKDMYDGVPAEDRQVVVKLVSSIRGRLQALRKKLAILAKRAPTASVNV.

One can recognise a Protein kinase domain in the interval 6–315; sequence YTRLDEIGRG…FPEFFENEVI (310 aa). ATP contacts are provided by residues 12–20 and Lys35; that span reads IGRGSFATV. The active-site Proton acceptor is Asp149. 2 disordered regions span residues 318-470 and 544-571; these read PIPG…EQER and FSGRSRADSTHHRQASYERRYGQSPTSA. A compositionally biased stretch (basic and acidic residues) spans 359–371; it reads TRREREVNREDVY. Over residues 437-452 the composition is skewed to polar residues; it reads TTTAIERQRSRNTYSE. 2 stretches are compositionally biased toward basic and acidic residues: residues 459–470 and 548–564; these read QPADKLKEEQER and SRADSTHHRQASYERRY.

This sequence belongs to the protein kinase superfamily. Ser/Thr protein kinase family. APG1/unc-51/ULK1 subfamily. Homodimer. Forms a ternary complex with ATG13 and ATG17.

It is found in the cytoplasm. It localises to the preautophagosomal structure membrane. It catalyses the reaction L-seryl-[protein] + ATP = O-phospho-L-seryl-[protein] + ADP + H(+). It carries out the reaction L-threonyl-[protein] + ATP = O-phospho-L-threonyl-[protein] + ADP + H(+). Its function is as follows. Serine/threonine protein kinase involved in the cytoplasm to vacuole transport (Cvt) and found to be essential in autophagy, where it is required for the formation of autophagosomes. Involved in the clearance of protein aggregates which cannot be efficiently cleared by the proteasome. Required for selective autophagic degradation of the nucleus (nucleophagy) as well as for mitophagy which contributes to regulate mitochondrial quantity and quality by eliminating the mitochondria to a basal level to fulfill cellular energy requirements and preventing excess ROS production. Also involved in endoplasmic reticulum-specific autophagic process, in selective removal of ER-associated degradation (ERAD) substrates. Plays a key role in ATG9 and ATG23 cycling through the pre-autophagosomal structure and is necessary to promote ATG18 binding to ATG9 through phosphorylation of ATG9. Catalyzes phosphorylation of ATG4, decreasing the interaction between ATG4 and ATG8 and impairing deconjugation of PE-conjugated forms of ATG8. The chain is Serine/threonine-protein kinase atg1 from Aspergillus clavatus (strain ATCC 1007 / CBS 513.65 / DSM 816 / NCTC 3887 / NRRL 1 / QM 1276 / 107).